Reading from the N-terminus, the 274-residue chain is MQFSKMHGLGNDFMVVDAVTQNVYFSPELIRRLADRHLGIGFDQLLIVEPPYDPDLDFHYRIFNADGSEVAQCGNGARCFARFVRLKGLTNKNEIRVSTQSGRMVLSITQDELVCVNMGEPNFEPQQIPFRANKAENIYLMRAAEQTVMCGVVSMGNPHCVLQVDNVKTAAVETLGPVLESHERFPERVNVGFMEVVHREHIRLRVYERGAGETQACGSGACAAVAVGIQQASLAEKVRVDLPGGSLHIAWKGPGHPLYMTGPATHVYDGFIHL.

Asparagine 11, glutamine 44, and asparagine 64 together coordinate substrate. Catalysis depends on cysteine 73, which acts as the Proton donor. Residues glycine 74–asparagine 75, asparagine 157, asparagine 190, and glutamate 208–arginine 209 contribute to the substrate site. The active-site Proton acceptor is cysteine 217. Position 218–219 (glycine 218–serine 219) interacts with substrate.

Belongs to the diaminopimelate epimerase family. In terms of assembly, homodimer.

It is found in the cytoplasm. The enzyme catalyses (2S,6S)-2,6-diaminopimelate = meso-2,6-diaminopimelate. The protein operates within amino-acid biosynthesis; L-lysine biosynthesis via DAP pathway; DL-2,6-diaminopimelate from LL-2,6-diaminopimelate: step 1/1. In terms of biological role, catalyzes the stereoinversion of LL-2,6-diaminopimelate (L,L-DAP) to meso-diaminopimelate (meso-DAP), a precursor of L-lysine and an essential component of the bacterial peptidoglycan. The protein is Diaminopimelate epimerase of Erwinia tasmaniensis (strain DSM 17950 / CFBP 7177 / CIP 109463 / NCPPB 4357 / Et1/99).